The following is a 222-amino-acid chain: Eukaryotic translation initiation factor 3 subunit K (222 aa).

The 163-residue stretch at 46 to 208 (YDLEANLAVL…KIKTKNITEK (163 aa)) folds into the PCI domain.

It belongs to the eIF-3 subunit K family. In terms of assembly, component of the eukaryotic translation initiation factor 3 (eIF-3) complex. The eIF-3 complex interacts with pix.

It localises to the cytoplasm. In terms of biological role, component of the eukaryotic translation initiation factor 3 (eIF-3) complex, which is involved in protein synthesis of a specialized repertoire of mRNAs and, together with other initiation factors, stimulates binding of mRNA and methionyl-tRNAi to the 40S ribosome. The eIF-3 complex specifically targets and initiates translation of a subset of mRNAs involved in cell proliferation. The polypeptide is Eukaryotic translation initiation factor 3 subunit K (Drosophila willistoni (Fruit fly)).